Consider the following 446-residue polypeptide: MEELGSLAVWLGAAWLSLVFALIVLPSALGVSLGISEAYMWVLVKTLEWATIRIEKGVKKPQPQMLKIPAANGIIERDETPMEKEIAGLHRMEFRFSDIFYFCRKGFEAIVEDEVTQRFSSEELVSWNLLTRTNVNFHYVSLRLTVVWVIGVIVRYCFLLPLRFTLAAIGITSMIVGTTVVGQLPNGSLKNYLSEVVHLTCSRILVRALSGTIHYHNKENKPQKGGICVANHTSPIDAIILTNDGCYAMVGQVHGGLMGVIQRATVKACPHVWFERSEIKDRHLVTKRLREHVADKNKLPILIFPEGTCINNTSVMMFKKGSFEIGGTIYPVAIKYDPQFGDAFWNSSKYNIVSYLLRIMTSWAIVCHVWYMPPMVRKEGEDAVQFANRVRSAIARQGGLTELPWDGGLKRAKVKDSFKEEQQKNYSKMLVRNGSQGNLPAGTESD.

Transmembrane regions (helical) follow at residues 25 to 45, 142 to 162, and 164 to 184; these read LPSALGVSLGISEAYMWVLVK, LRLTVVWVIGVIVRYCFLLPL, and FTLAAIGITSMIVGTTVVGQL. The short motif at 232-237 is the HXXXXD motif element; sequence HTSPID. A helical membrane pass occupies residues 352–372; the sequence is IVSYLLRIMTSWAIVCHVWYM. The interval 418–446 is disordered; sequence FKEEQQKNYSKMLVRNGSQGNLPAGTESD.

Belongs to the 1-acyl-sn-glycerol-3-phosphate acyltransferase family.

Its subcellular location is the endoplasmic reticulum membrane. The catalysed reaction is sn-glycerol 3-phosphate + an acyl-CoA = a 1-acyl-sn-glycero-3-phosphate + CoA. The enzyme catalyses a 1-acyl-sn-glycero-3-phosphate + an acyl-CoA = a 1,2-diacyl-sn-glycero-3-phosphate + CoA. It catalyses the reaction dodecanoyl-CoA + sn-glycerol 3-phosphate = 1-dodecanoyl-sn-glycerol 3-phosphate + CoA. It carries out the reaction sn-glycerol 3-phosphate + hexadecanoyl-CoA = 1-hexadecanoyl-sn-glycero-3-phosphate + CoA. The catalysed reaction is sn-glycerol 3-phosphate + (9Z)-octadecenoyl-CoA = 1-(9Z-octadecenoyl)-sn-glycero-3-phosphate + CoA. The enzyme catalyses (9Z,12Z)-octadecadienoyl-CoA + sn-glycerol 3-phosphate = 1-(9Z,12Z)-octadecadienoyl-sn-glycero-3-phosphate + CoA. It catalyses the reaction 1-tetradecanoyl-sn-glycerol 3-phosphate + (9Z)-octadecenoyl-CoA = 1-tetradecanoyl-2-(9Z)-octadecenoyl-sn-glycero-3-phosphate + CoA. It carries out the reaction 1-hexadecanoyl-sn-glycero-3-phosphate + (9Z)-octadecenoyl-CoA = 1-hexadecanoyl-2-(9Z-octadecenoyl)-sn-glycero-3-phosphate + CoA. The catalysed reaction is 1-(9Z-octadecenoyl)-sn-glycero-3-phosphate + (9Z)-octadecenoyl-CoA = 1,2-di-(9Z-octadecenoyl)-sn-glycero-3-phosphate + CoA. The enzyme catalyses 1-(6Z,9Z,12Z-octadecatrienoyl)-sn-glycero-3-phosphate + (9Z)-octadecenoyl-CoA = (6Z,9Z,12Z)-octadecatrienoyl-2-(9Z)-octadecenoyl-sn-glycero-3-phosphate + CoA. It catalyses the reaction 1-(9Z,12Z,15Z)-octadecatrienoyl-sn-glycero-3-phosphate + (9Z)-octadecenoyl-CoA = 1-(9Z,12Z,15Z)-octadecatrienoyl-2-(9Z)-octadecenoyl-sn-glycero-3-phosphate + CoA. It carries out the reaction 1-(9Z-octadecenoyl)-sn-glycero-3-phosphate + tetradecanoyl-CoA = 1-(9Z)-octadecenoyl-2-tetradecanoyl-sn-glycero-3-phosphate + CoA. The catalysed reaction is 1-(9Z-octadecenoyl)-sn-glycero-3-phosphate + hexadecanoyl-CoA = 1-(9Z)-octadecenoyl-2-hexadecanoyl-sn-glycero-3-phosphate + CoA. The enzyme catalyses 1-(9Z-octadecenoyl)-sn-glycero-3-phosphate + octadecanoyl-CoA = 1-(9Z-octadecenoyl)-2-octadecanoyl-sn-glycero-3-phosphate + CoA. It catalyses the reaction 1-(9Z-octadecenoyl)-sn-glycero-3-phosphate + (9Z,12Z)-octadecadienoyl-CoA = 1-(9Z)-octadecenoyl-2-(9Z,12Z)-octadecadienoyl-sn-glycero-3-phosphate + CoA. It carries out the reaction 1-(5Z,8Z,11Z,14Z-eicosatetraenoyl)-sn-glycero-3-phosphate + (9Z)-octadecenoyl-CoA = 1-(5Z,8Z,11Z,14Z)-eicosatetraenoyl-2-(9Z)-octadecenoyl-sn-glycero-3-phosphate + CoA. The protein operates within glycerolipid metabolism; triacylglycerol biosynthesis. It functions in the pathway phospholipid metabolism; CDP-diacylglycerol biosynthesis; CDP-diacylglycerol from sn-glycerol 3-phosphate: step 1/3. Functionally, converts glycerol-3-phosphate to 1-acyl-sn-glycerol-3-phosphate (lysophosphatidic acid or LPA) by incorporating an acyl moiety at the sn-1 position of the glycerol backbone. Also converts LPA into 1,2-diacyl-sn-glycerol-3-phosphate (phosphatidic acid or PA) by incorporating an acyl moiety at the sn-2 position of the glycerol backbone. Protects cells against lipotoxicity. This Gallus gallus (Chicken) protein is Glycerol-3-phosphate acyltransferase 3.